A 538-amino-acid polypeptide reads, in one-letter code: Pyruvate kinase (538 aa).

Ser45 carries the post-translational modification Phosphoserine. Arg72 is a binding site for substrate. Residues Asn74, Ser76, Asp107, and Thr108 each coordinate K(+). 74-77 is a binding site for ATP; it reads NFSH. Residues Arg114 and Lys200 each contribute to the ATP site. Mg(2+) is bound at residue Glu265. Substrate-binding residues include Gly288, Asp289, and Thr321. Asp289 lines the Mg(2+) pocket.

Belongs to the pyruvate kinase family. As to quaternary structure, homotetramer. It depends on Mg(2+) as a cofactor. K(+) is required as a cofactor.

It catalyses the reaction pyruvate + ATP = phosphoenolpyruvate + ADP + H(+). It participates in carbohydrate degradation; glycolysis; pyruvate from D-glyceraldehyde 3-phosphate: step 5/5. This chain is Pyruvate kinase (pki1), found in Hypocrea jecorina (Trichoderma reesei).